The following is a 1368-amino-acid chain: DNA-directed RNA polymerase subunit beta (1368 aa).

The protein belongs to the RNA polymerase beta chain family. The RNAP catalytic core consists of 2 alpha, 1 beta, 1 beta' and 1 omega subunit. When a sigma factor is associated with the core the holoenzyme is formed, which can initiate transcription.

It carries out the reaction RNA(n) + a ribonucleoside 5'-triphosphate = RNA(n+1) + diphosphate. Functionally, DNA-dependent RNA polymerase catalyzes the transcription of DNA into RNA using the four ribonucleoside triphosphates as substrates. In Legionella pneumophila (strain Corby), this protein is DNA-directed RNA polymerase subunit beta.